The primary structure comprises 125 residues: Aspartate 1-decarboxylase 2 (125 aa).

S25 serves as the catalytic Schiff-base intermediate with substrate; via pyruvic acid. S25 carries the pyruvic acid (Ser) modification. T57 contributes to the substrate binding site. The active-site Proton donor is Y58. 73 to 75 serves as a coordination point for substrate; it reads GAA.

It belongs to the PanD family. Heterooctamer of four alpha and four beta subunits. Pyruvate is required as a cofactor. Is synthesized initially as an inactive proenzyme, which is activated by self-cleavage at a specific serine bond to produce a beta-subunit with a hydroxyl group at its C-terminus and an alpha-subunit with a pyruvoyl group at its N-terminus.

It is found in the cytoplasm. It catalyses the reaction L-aspartate + H(+) = beta-alanine + CO2. The protein operates within cofactor biosynthesis; (R)-pantothenate biosynthesis; beta-alanine from L-aspartate: step 1/1. In terms of biological role, catalyzes the pyruvoyl-dependent decarboxylation of aspartate to produce beta-alanine. The chain is Aspartate 1-decarboxylase 2 from Gloeobacter violaceus (strain ATCC 29082 / PCC 7421).